A 401-amino-acid chain; its full sequence is Cartilage-associated protein (401 aa).

Positions 1–26 (MEPGRRGAAALLALLCVACALRAGRA) are cleaved as a signal peptide. N-linked (GlcNAc...) asparagine glycosylation is found at asparagine 87 and asparagine 363.

The protein belongs to the leprecan family. As to expression, found in articular chondrocytes. Expressed in a variety of tissues.

It localises to the secreted. It is found in the extracellular space. The protein localises to the extracellular matrix. Its function is as follows. Necessary for efficient 3-hydroxylation of fibrillar collagen prolyl residues. This chain is Cartilage-associated protein (CRTAP), found in Homo sapiens (Human).